A 500-amino-acid chain; its full sequence is Plexin domain-containing protein 1 (500 aa).

The N-terminal stretch at 1-18 (MRGELWLLVLVLREAARA) is a signal peptide. The Extracellular portion of the chain corresponds to 19-426 (LSPQPGAGHD…TKGTPVHLGT (408 aa)). 2 disordered regions span residues 20–39 (SPQPGAGHDEGPGSGWAAKG) and 46–78 (RRARESPGHVSEPDRTQLSQDLGGGTLAMDTLP). O-linked (Xyl...) (chondroitin sulfate) serine glycosylation occurs at S33. Positions 47-60 (RARESPGHVSEPDR) are enriched in basic and acidic residues. 2 N-linked (GlcNAc...) asparagine glycosylation sites follow: N80 and N197. Residues 359 to 379 (FQDEDHDSASPDTSFSPYDGD) are disordered. The span at 368–379 (SPDTSFSPYDGD) shows a compositional bias: polar residues. A helical membrane pass occupies residues 427-447 (IVGIVLAVLLVAAIILAGIYI). Topologically, residues 448–500 (NGHPTSNAALFFIERRPHHWPAMKFRSHPDHSTYAEVEPSGHEKEGFMEAEQC) are cytoplasmic. Basic and acidic residues predominate over residues 479–494 (STYAEVEPSGHEKEGF). The tract at residues 479–500 (STYAEVEPSGHEKEGFMEAEQC) is disordered.

The protein belongs to the plexin family. As to quaternary structure, interacts with NID1. May interact with CTTN. Post-translationally, N-glycosylated. In terms of tissue distribution, detected in urine (at protein level). Detected in endothelial cells from colorectal cancer, and in endothelial cells from primary cancers of the lung, liver, pancreas, breast and brain. Not detectable in endothelial cells from normal tissue. Expressed in fibrovascular membrane with increased expression in individuals with proliferative diabetic retinopathy.

It is found in the secreted. The protein resides in the cell membrane. The protein localises to the cell junction. Its subcellular location is the tight junction. It localises to the cytoplasm. Functionally, plays a critical role in endothelial cell capillary morphogenesis. The polypeptide is Plexin domain-containing protein 1 (PLXDC1) (Homo sapiens (Human)).